A 136-amino-acid chain; its full sequence is Small ribosomal subunit protein eS19 (136 aa).

The residue at position 23 (K23) is an N6-acetyllysine. R67 carries the post-translational modification Omega-N-methylarginine. N6-acetyllysine is present on residues K111 and K115. The segment at 116–136 (DQDGGRKLTPQGQRDLDRIAG) is disordered.

The protein belongs to the eukaryotic ribosomal protein eS19 family. Component of the small ribosomal subunit. Part of the small subunit (SSU) processome, composed of more than 70 proteins and the RNA chaperone small nucleolar RNA (snoRNA) U3. Interacts with RPS19BP1; the interaction is direct and mediates the integration of RPS19 in state post-A1. Interacts with RPS19BP1.

The protein localises to the cytoplasm. It localises to the nucleus. Its subcellular location is the nucleolus. Component of the small ribosomal subunit. The ribosome is a large ribonucleoprotein complex responsible for the synthesis of proteins in the cell. Required for pre-rRNA processing and maturation of 40S ribosomal subunits. Part of the small subunit (SSU) processome, first precursor of the small eukaryotic ribosomal subunit. During the assembly of the SSU processome in the nucleolus, many ribosome biogenesis factors, an RNA chaperone and ribosomal proteins associate with the nascent pre-rRNA and work in concert to generate RNA folding, modifications, rearrangements and cleavage as well as targeted degradation of pre-ribosomal RNA by the RNA exosome. The sequence is that of Small ribosomal subunit protein eS19 (RPS19) from Sus scrofa (Pig).